We begin with the raw amino-acid sequence, 436 residues long: Citrate synthase (436 aa).

Active-site residues include H311 and D370.

Belongs to the citrate synthase family.

The enzyme catalyses oxaloacetate + acetyl-CoA + H2O = citrate + CoA + H(+). It participates in carbohydrate metabolism; tricarboxylic acid cycle; isocitrate from oxaloacetate: step 1/2. The sequence is that of Citrate synthase (gltA) from Rickettsia typhi (strain ATCC VR-144 / Wilmington).